The sequence spans 90 residues: UPF0237 protein MMP0657 (90 aa).

The ACT domain maps to 5-79; sequence VITVVGVDKP…SEIGVKINVQ (75 aa).

This sequence belongs to the UPF0237 family.

The sequence is that of UPF0237 protein MMP0657 from Methanococcus maripaludis (strain DSM 14266 / JCM 13030 / NBRC 101832 / S2 / LL).